The sequence spans 206 residues: Small ribosomal subunit protein uS4 (206 aa).

Residues 96–156 (SRLDNVVYRM…EKSKKQLRIQ (61 aa)) enclose the S4 RNA-binding domain.

Belongs to the universal ribosomal protein uS4 family. Part of the 30S ribosomal subunit. Contacts protein S5. The interaction surface between S4 and S5 is involved in control of translational fidelity.

One of the primary rRNA binding proteins, it binds directly to 16S rRNA where it nucleates assembly of the body of the 30S subunit. Functionally, with S5 and S12 plays an important role in translational accuracy. This chain is Small ribosomal subunit protein uS4, found in Francisella philomiragia subsp. philomiragia (strain ATCC 25017 / CCUG 19701 / FSC 153 / O#319-036).